Here is a 376-residue protein sequence, read N- to C-terminus: Succinyl-diaminopimelate desuccinylase (376 aa).

A Zn(2+)-binding site is contributed by histidine 67. Aspartate 69 is an active-site residue. Aspartate 100 contacts Zn(2+). Glutamate 134 serves as the catalytic Proton acceptor. Zn(2+) contacts are provided by glutamate 135, glutamate 163, and histidine 349.

The protein belongs to the peptidase M20A family. DapE subfamily. Homodimer. It depends on Zn(2+) as a cofactor. Co(2+) is required as a cofactor.

It carries out the reaction N-succinyl-(2S,6S)-2,6-diaminopimelate + H2O = (2S,6S)-2,6-diaminopimelate + succinate. The protein operates within amino-acid biosynthesis; L-lysine biosynthesis via DAP pathway; LL-2,6-diaminopimelate from (S)-tetrahydrodipicolinate (succinylase route): step 3/3. Catalyzes the hydrolysis of N-succinyl-L,L-diaminopimelic acid (SDAP), forming succinate and LL-2,6-diaminopimelate (DAP), an intermediate involved in the bacterial biosynthesis of lysine and meso-diaminopimelic acid, an essential component of bacterial cell walls. In Nitrosomonas europaea (strain ATCC 19718 / CIP 103999 / KCTC 2705 / NBRC 14298), this protein is Succinyl-diaminopimelate desuccinylase.